A 208-amino-acid chain; its full sequence is Methyl-CpG-binding domain protein 3-like 4 (208 aa).

This sequence belongs to the MBD3L family.

This chain is Methyl-CpG-binding domain protein 3-like 4 (MBD3L4), found in Homo sapiens (Human).